Here is a 160-residue protein sequence, read N- to C-terminus: Large ribosomal subunit protein eL21 (160 aa).

Basic and acidic residues-rich tracts occupy residues 112–123 (NDQKKKEAKEKG) and 136–146 (REAHFVRTNGK). Residues 112-146 (NDQKKKEAKEKGTWVQLNGQPAPPREAHFVRTNGK) are disordered.

This sequence belongs to the eukaryotic ribosomal protein eL21 family. Component of the large ribosomal subunit.

Its subcellular location is the cytoplasm. It is found in the cytosol. The protein localises to the endoplasmic reticulum. Component of the large ribosomal subunit. The ribosome is a large ribonucleoprotein complex responsible for the synthesis of proteins in the cell. The protein is Large ribosomal subunit protein eL21 (Rpl21) of Rattus norvegicus (Rat).